The primary structure comprises 487 residues: Glutamyl-tRNA(Gln) amidotransferase subunit A (487 aa).

Residues Lys-77 and Ser-152 each act as charge relay system in the active site. Ser-176 functions as the Acyl-ester intermediate in the catalytic mechanism.

It belongs to the amidase family. GatA subfamily. As to quaternary structure, heterotrimer of A, B and C subunits.

It catalyses the reaction L-glutamyl-tRNA(Gln) + L-glutamine + ATP + H2O = L-glutaminyl-tRNA(Gln) + L-glutamate + ADP + phosphate + H(+). Its function is as follows. Allows the formation of correctly charged Gln-tRNA(Gln) through the transamidation of misacylated Glu-tRNA(Gln) in organisms which lack glutaminyl-tRNA synthetase. The reaction takes place in the presence of glutamine and ATP through an activated gamma-phospho-Glu-tRNA(Gln). In Lysinibacillus sphaericus (strain C3-41), this protein is Glutamyl-tRNA(Gln) amidotransferase subunit A.